The following is a 90-amino-acid chain: Darcynin 1 (90 aa).

This sequence belongs to the darcynin family.

This Acinetobacter baumannii (strain ATCC 17978 / DSM 105126 / CIP 53.77 / LMG 1025 / NCDC KC755 / 5377) protein is Darcynin 1.